The following is a 472-amino-acid chain: UDP-N-acetylmuramate--L-alanine ligase (472 aa).

119–125 is an ATP binding site; that stretch reads GTHGKTT.

It belongs to the MurCDEF family.

The protein localises to the cytoplasm. The catalysed reaction is UDP-N-acetyl-alpha-D-muramate + L-alanine + ATP = UDP-N-acetyl-alpha-D-muramoyl-L-alanine + ADP + phosphate + H(+). It participates in cell wall biogenesis; peptidoglycan biosynthesis. Functionally, cell wall formation. This chain is UDP-N-acetylmuramate--L-alanine ligase, found in Caulobacter sp. (strain K31).